The primary structure comprises 908 residues: MELSVSSPKQSVLSPPDCMSDPEEEHEISEEEDDDRNHKHRRKEETRSQSLEQDSSDQAFSRPYRKNYRHYENGNSFSEHEKRSFGTGSGQRVQFDNQRMRSNPMFSRDSGPGRGRGNYGSWAQRDSRFNPVDLSSHMVQVGSMGQGMFGGRGLAGVSAAQSAPWPPFGMIPGVPNGGLDGFHHLQGSLRPPLNAPLNMGIPRQRCRDFEERGFCLRGDMCPMEHGMNRIVVDDVQSLSQFNLPVSVPGAPHLAASSKQVPAQFGGASFMNPKGAHGRTNEGGMAVDGLGYGDAYPSAGGTDFYDPDQPLWNNSTGETSGAISTLNSHGVDENVAPLDDSNQDAAENGCGIRDSRSTSQSVWGRMKGSNSQANSKEKADAVLNSSAVPEDQLKEVSVNSSRHGKQNHVGESVAKVVDSSNISNDMMNNTRKPTQKAMRTLFVNYVPHESNRRDLILAHFQKFGKVIDIHIPVNSERAFVQFSKREEAESALRAPDAVMGNRFIKLWWANRDSIPDNGLSTGSGASMKGRSMTASGAQNQFPIAAASKSNHVSSIAKVPTFQTGGAPSSSEQPKPVVVTTSGPKVTPLQQKKADTLERLKETLRKKQEMLEQKRNEYRKKLATLEKQGTVVKREEADEPDAKRVKLDTASDSGAAIASPKTESSTDKKVPILKPLSTAKLSTETPSPDSKNFKQRPYSFTTSLNAPMVNRYKLDNRTTTIKVVPPLPTGLADVAVVKEHFSSYGEVSKVELEDNASIDSGKDHETQNESRAACVTFVKRSAAEKAFANAKCWQEHTLQLVWVTRQSNRESNNNNNNSNSLSVSRDNLSSKNKCASVSNDPKPAVEVKTSSTEEPENTNVSGDNDSTLDKQETKESDNDNNKSNHESIEGASEVIATAGTDEEQSEQIHQ.

Polar residues predominate over residues 1–13 (MELSVSSPKQSVL). Residues 1–124 (MELSVSSPKQ…GRGNYGSWAQ (124 aa)) are disordered. The segment covering 20-34 (SDPEEEHEISEEEDD) has biased composition (acidic residues). Polar residues-rich tracts occupy residues 48–59 (SQSLEQDSSDQA) and 90–105 (GQRVQFDNQRMRSNPM). Residues 200 to 228 (GIPRQRCRDFEERGFCLRGDMCPMEHGMN) form a C3H1-type zinc finger. The interval 333-375 (NVAPLDDSNQDAAENGCGIRDSRSTSQSVWGRMKGSNSQANSK) is disordered. Over residues 356–373 (STSQSVWGRMKGSNSQAN) the composition is skewed to polar residues. The region spanning 438–510 (RTLFVNYVPH…RFIKLWWANR (73 aa)) is the RRM domain. Disordered regions lie at residues 558-590 (PTFQTGGAPSSSEQPKPVVVTTSGPKVTPLQQK), 629-695 (VVKR…KQRP), and 807-908 (RESN…QIHQ). Residues 559–588 (TFQTGGAPSSSEQPKPVVVTTSGPKVTPLQ) are compositionally biased toward polar residues. A coiled-coil region spans residues 587 to 630 (LQQKKADTLERLKETLRKKQEMLEQKRNEYRKKLATLEKQGTVV). Basic and acidic residues predominate over residues 630-647 (VKREEADEPDAKRVKLDT). A Phosphoserine modification is found at S657. Positions 677–688 (AKLSTETPSPDS) are enriched in polar residues. A compositionally biased stretch (low complexity) spans 807–828 (RESNNNNNNSNSLSVSRDNLSS). Over residues 846-863 (KTSSTEEPENTNVSGDND) the composition is skewed to polar residues. Positions 865 to 886 (TLDKQETKESDNDNNKSNHESI) are enriched in basic and acidic residues. Residues 898–908 (TDEEQSEQIHQ) show a composition bias toward acidic residues.

This Arabidopsis thaliana (Mouse-ear cress) protein is Zinc finger CCCH domain-containing protein 41.